Reading from the N-terminus, the 279-residue chain is NH(3)-dependent NAD(+) synthetase (279 aa).

40–47 (GLSGGIDS) is a binding site for ATP. D46 is a Mg(2+) binding site. R122 contacts deamido-NAD(+). T142 contacts ATP. Residue E147 coordinates Mg(2+). The deamido-NAD(+) site is built by K155 and D162. 2 residues coordinate ATP: K171 and S193. Residue 253 to 254 (HK) coordinates deamido-NAD(+).

Belongs to the NAD synthetase family. As to quaternary structure, homodimer.

It carries out the reaction deamido-NAD(+) + NH4(+) + ATP = AMP + diphosphate + NAD(+) + H(+). Its pathway is cofactor biosynthesis; NAD(+) biosynthesis; NAD(+) from deamido-NAD(+) (ammonia route): step 1/1. Catalyzes the ATP-dependent amidation of deamido-NAD to form NAD. Uses ammonia as a nitrogen source. This chain is NH(3)-dependent NAD(+) synthetase, found in Sulfurisphaera tokodaii (strain DSM 16993 / JCM 10545 / NBRC 100140 / 7) (Sulfolobus tokodaii).